A 357-amino-acid chain; its full sequence is Peptide chain release factor 1 (357 aa).

Gln232 is subject to N5-methylglutamine.

The protein belongs to the prokaryotic/mitochondrial release factor family. Post-translationally, methylated by PrmC. Methylation increases the termination efficiency of RF1.

Its subcellular location is the cytoplasm. Functionally, peptide chain release factor 1 directs the termination of translation in response to the peptide chain termination codons UAG and UAA. The protein is Peptide chain release factor 1 of Oleidesulfovibrio alaskensis (strain ATCC BAA-1058 / DSM 17464 / G20) (Desulfovibrio alaskensis).